We begin with the raw amino-acid sequence, 87 residues long: Putative BTB/POZ domain-containing protein At3g29740 (87 aa).

Residues 24-87 (VDVRLKAGDS…KHTELVALVE (64 aa)) form the BTB domain.

It functions in the pathway protein modification; protein ubiquitination. In terms of biological role, may act as a substrate-specific adapter of an E3 ubiquitin-protein ligase complex (CUL3-RBX1-BTB) which mediates the ubiquitination and subsequent proteasomal degradation of target proteins. The sequence is that of Putative BTB/POZ domain-containing protein At3g29740 from Arabidopsis thaliana (Mouse-ear cress).